A 253-amino-acid polypeptide reads, in one-letter code: Adenylate kinase (253 aa).

Position 15–20 (15–20) interacts with ATP; the sequence is GSGKGT. Positions 35-64 are NMP; sequence SSGDLLRNAVSQNTPLGQEIKSYLDQGKLL. Residues serine 36, arginine 41, 62–64, 103–106, and glutamine 110 contribute to the AMP site; these read KLL and GFPR. The interval 143–176 is LID; it reads SRYICPSCQGIYNKQQGFSRCPKCLVELTRRSDD. Arginine 144 is an ATP binding site. Zn(2+) is bound by residues cysteine 147 and cysteine 150. ATP is bound at residue 153 to 154; it reads IY. Residues cysteine 163 and cysteine 166 each coordinate Zn(2+). 2 residues coordinate AMP: arginine 173 and arginine 184. Alanine 212 is an ATP binding site.

This sequence belongs to the adenylate kinase family. Monomer.

It localises to the cytoplasm. The catalysed reaction is AMP + ATP = 2 ADP. It functions in the pathway purine metabolism; AMP biosynthesis via salvage pathway; AMP from ADP: step 1/1. Catalyzes the reversible transfer of the terminal phosphate group between ATP and AMP. Plays an important role in cellular energy homeostasis and in adenine nucleotide metabolism. The chain is Adenylate kinase from Chlamydia muridarum (strain MoPn / Nigg).